A 93-amino-acid chain; its full sequence is RNA-binding protein Hfq (93 aa).

The 60-residue stretch at 9–68 (DPYLNALRRERIPVSIYLVNGIKLQGQIESFDQFVILLKNTVSQMVYKHAISTVVPARAI) folds into the Sm domain. The segment covering 70-81 (HNNNSNHAHQAA) has biased composition (low complexity). The interval 70–93 (HNNNSNHAHQAAPVQSAEVVEKVE) is disordered.

It belongs to the Hfq family. As to quaternary structure, homohexamer.

Its function is as follows. RNA chaperone that binds small regulatory RNA (sRNAs) and mRNAs to facilitate mRNA translational regulation in response to envelope stress, environmental stress and changes in metabolite concentrations. Also binds with high specificity to tRNAs. The protein is RNA-binding protein Hfq of Glaesserella parasuis serovar 5 (strain SH0165) (Haemophilus parasuis).